Consider the following 373-residue polypeptide: ATP-dependent 6-phosphofructokinase (373 aa).

ATP is bound by residues G12, 74–75 (RD), and 110–113 (GGGT). Residues 133–135 (TID), R170, 177–179 (MGH), E230, R291, and 297–300 (YVQR) contribute to the substrate site. The active-site Proton acceptor is the D135.

Belongs to the phosphofructokinase type A (PFKA) family. Mixed-substrate PFK group III subfamily. As to quaternary structure, homodimer or homotetramer. It depends on Mg(2+) as a cofactor.

Its subcellular location is the cytoplasm. The enzyme catalyses beta-D-fructose 6-phosphate + ATP = beta-D-fructose 1,6-bisphosphate + ADP + H(+). Its pathway is carbohydrate degradation; glycolysis; D-glyceraldehyde 3-phosphate and glycerone phosphate from D-glucose: step 3/4. Functionally, catalyzes the phosphorylation of D-fructose 6-phosphate to fructose 1,6-bisphosphate by ATP, the first committing step of glycolysis. In Propionibacterium freudenreichii subsp. shermanii (strain ATCC 9614 / DSM 4902 / CIP 103027 / NCIMB 8099 / CIRM-BIA1), this protein is ATP-dependent 6-phosphofructokinase.